The following is a 134-amino-acid chain: ATP synthase epsilon chain (134 aa).

It belongs to the ATPase epsilon chain family. In terms of assembly, F-type ATPases have 2 components, CF(1) - the catalytic core - and CF(0) - the membrane proton channel. CF(1) has five subunits: alpha(3), beta(3), gamma(1), delta(1), epsilon(1). CF(0) has three main subunits: a, b and c.

The protein resides in the cell inner membrane. Functionally, produces ATP from ADP in the presence of a proton gradient across the membrane. The sequence is that of ATP synthase epsilon chain from Nitratidesulfovibrio vulgaris (strain DSM 19637 / Miyazaki F) (Desulfovibrio vulgaris).